The sequence spans 388 residues: Succinate--CoA ligase [ADP-forming] subunit beta (388 aa).

The region spanning 9–244 is the ATP-grasp domain; that stretch reads KQLFAEYGLP…PSQDDPREAH (236 aa). Residues Lys46, 53–55, Glu99, Thr102, and Glu107 contribute to the ATP site; that span reads GRG. Residues Asn199 and Asp213 each contribute to the Mg(2+) site. Substrate contacts are provided by residues Asn264 and 321–323; that span reads GIV.

The protein belongs to the succinate/malate CoA ligase beta subunit family. Heterotetramer of two alpha and two beta subunits. Mg(2+) serves as cofactor.

It carries out the reaction succinate + ATP + CoA = succinyl-CoA + ADP + phosphate. The enzyme catalyses GTP + succinate + CoA = succinyl-CoA + GDP + phosphate. It functions in the pathway carbohydrate metabolism; tricarboxylic acid cycle; succinate from succinyl-CoA (ligase route): step 1/1. Its function is as follows. Succinyl-CoA synthetase functions in the citric acid cycle (TCA), coupling the hydrolysis of succinyl-CoA to the synthesis of either ATP or GTP and thus represents the only step of substrate-level phosphorylation in the TCA. The beta subunit provides nucleotide specificity of the enzyme and binds the substrate succinate, while the binding sites for coenzyme A and phosphate are found in the alpha subunit. In Pseudomonas syringae pv. syringae (strain B728a), this protein is Succinate--CoA ligase [ADP-forming] subunit beta.